Consider the following 192-residue polypeptide: Adenylate kinase (192 aa).

10–18 serves as a coordination point for ATP; that stretch reads GVPGVGGTT.

This sequence belongs to the archaeal adenylate kinase family. Monomer.

It is found in the cytoplasm. It carries out the reaction AMP + ATP = 2 ADP. The sequence is that of Adenylate kinase from Methanococcus maripaludis (strain C6 / ATCC BAA-1332).